A 155-amino-acid polypeptide reads, in one-letter code: MGLKLLESRLCLLLSLGLVLMLASCQPPTPSQWFEIQHIYNRAYPRCNDAMRHRNRFTGHCKDINTFLHTSFASVVGVCGNRNIPCGNRTYRNCHNSRYRVSITFCNLTTPARIYTQCRYQTTRSRKFYTVGCDPRTPRDSPMYPVVPVHLDRIF.

The N-terminal stretch at Met-1–Cys-25 is a signal peptide. His-38 functions as the Proton acceptor in the catalytic mechanism. 4 disulfides stabilise this stretch: Cys-47/Cys-106, Cys-61/Cys-118, Cys-79/Cys-133, and Cys-86/Cys-94. Lys-62–Thr-66 is a binding site for substrate. 2 N-linked (GlcNAc...) asparagine glycosylation sites follow: Asn-88 and Asn-107. Catalysis depends on His-150, which acts as the Proton donor.

Belongs to the pancreatic ribonuclease family.

The protein resides in the cytoplasmic granule. Cytotoxin and helminthotoxin with ribonuclease activity. Possesses a wide variety of biological activities. The chain is Eosinophil cationic protein (Rnase3) from Rattus norvegicus (Rat).